The primary structure comprises 97 residues: UPF0250 protein RSc0326 (97 aa).

It belongs to the UPF0250 family.

This chain is UPF0250 protein RSc0326, found in Ralstonia nicotianae (strain ATCC BAA-1114 / GMI1000) (Ralstonia solanacearum).